The sequence spans 293 residues: NAD kinase (293 aa).

Catalysis depends on aspartate 73, which acts as the Proton acceptor. Residues 73–74 (DG), 147–148 (NE), arginine 175, aspartate 177, and 188–193 (TAYSMS) each bind NAD(+).

Belongs to the NAD kinase family. It depends on a divalent metal cation as a cofactor.

Its subcellular location is the cytoplasm. It catalyses the reaction NAD(+) + ATP = ADP + NADP(+) + H(+). Functionally, involved in the regulation of the intracellular balance of NAD and NADP, and is a key enzyme in the biosynthesis of NADP. Catalyzes specifically the phosphorylation on 2'-hydroxyl of the adenosine moiety of NAD to yield NADP. In Colwellia psychrerythraea (strain 34H / ATCC BAA-681) (Vibrio psychroerythus), this protein is NAD kinase.